The sequence spans 734 residues: Photosystem I P700 chlorophyll a apoprotein A2 (734 aa).

A run of 8 helical transmembrane segments spans residues 46 to 69, 135 to 158, 175 to 199, 273 to 291, 330 to 353, 369 to 395, 417 to 439, and 517 to 535; these read IFAS…FHVA, LYTG…FHLQ, LDHH…HVAI, IAHH…GHMY, LHFQ…QHMY, AALY…IFFI, AIIS…LYVH, and FLVH…LILV. Residues Cys559 and Cys568 each coordinate [4Fe-4S] cluster. 2 helical membrane-spanning segments follow: residues 575–596 and 643–665; these read AFYL…YWHW and LSVW…MFLI. Chlorophyll a contacts are provided by His654, Met662, and Tyr670. Residue Trp671 participates in phylloquinone binding. The chain crosses the membrane as a helical span at residues 707 to 727; the sequence is LVGLAHFSVGYIFTYAAFLIA.

This sequence belongs to the PsaA/PsaB family. As to quaternary structure, the PsaA/B heterodimer binds the P700 chlorophyll special pair and subsequent electron acceptors. PSI consists of a core antenna complex that captures photons, and an electron transfer chain that converts photonic excitation into a charge separation. The eukaryotic PSI reaction center is composed of at least 11 subunits. P700 is a chlorophyll a/chlorophyll a' dimer, A0 is one or more chlorophyll a, A1 is one or both phylloquinones and FX is a shared 4Fe-4S iron-sulfur center. serves as cofactor.

It localises to the plastid. The protein localises to the chloroplast thylakoid membrane. The catalysed reaction is reduced [plastocyanin] + hnu + oxidized [2Fe-2S]-[ferredoxin] = oxidized [plastocyanin] + reduced [2Fe-2S]-[ferredoxin]. Its function is as follows. PsaA and PsaB bind P700, the primary electron donor of photosystem I (PSI), as well as the electron acceptors A0, A1 and FX. PSI is a plastocyanin-ferredoxin oxidoreductase, converting photonic excitation into a charge separation, which transfers an electron from the donor P700 chlorophyll pair to the spectroscopically characterized acceptors A0, A1, FX, FA and FB in turn. Oxidized P700 is reduced on the lumenal side of the thylakoid membrane by plastocyanin. The chain is Photosystem I P700 chlorophyll a apoprotein A2 from Cycas taitungensis (Prince sago).